The primary structure comprises 47 residues: Large ribosomal subunit protein bL36B (47 aa).

Belongs to the bacterial ribosomal protein bL36 family.

The sequence is that of Large ribosomal subunit protein bL36B from Pectobacterium atrosepticum (strain SCRI 1043 / ATCC BAA-672) (Erwinia carotovora subsp. atroseptica).